The sequence spans 305 residues: Aspartate carbamoyltransferase catalytic subunit (305 aa).

R51 and T52 together coordinate carbamoyl phosphate. Residue K79 participates in L-aspartate binding. 3 residues coordinate carbamoyl phosphate: R101, H130, and Q133. 2 residues coordinate L-aspartate: R163 and R215. Carbamoyl phosphate-binding residues include G256 and P257.

The protein belongs to the aspartate/ornithine carbamoyltransferase superfamily. ATCase family. Heterododecamer (2C3:3R2) of six catalytic PyrB chains organized as two trimers (C3), and six regulatory PyrI chains organized as three dimers (R2).

The enzyme catalyses carbamoyl phosphate + L-aspartate = N-carbamoyl-L-aspartate + phosphate + H(+). It participates in pyrimidine metabolism; UMP biosynthesis via de novo pathway; (S)-dihydroorotate from bicarbonate: step 2/3. Functionally, catalyzes the condensation of carbamoyl phosphate and aspartate to form carbamoyl aspartate and inorganic phosphate, the committed step in the de novo pyrimidine nucleotide biosynthesis pathway. The chain is Aspartate carbamoyltransferase catalytic subunit from Ehrlichia canis (strain Jake).